A 238-amino-acid polypeptide reads, in one-letter code: Bacterial microcompartment shell protein PduB (238 aa).

BMC circularly permuted domains lie at 14 to 125 (FVGA…VYNA) and 126 to 225 (KAGH…LSQF). Cys158 and Cys197 are joined by a disulfide.

The protein belongs to the EutL/PduB family. Homotrimerizes to form a pseudohexamer with a central pore 7.5 Angstroms wide and 22 Angstroms long; the pore channel in the crystal binds up to 4 glycerol molecules. A disulfide bond forms in the pore, it is not clear if this is an artifact. The trimers pack into an array.

The protein resides in the bacterial microcompartment. It participates in polyol metabolism; 1,2-propanediol degradation. Functionally, one of the major shell proteins of the bacterial microcompartment (BMC) dedicated to 1,2-propanediol (1,2-PD) degradation. Probably involved in a propanediol fermentation/reuterin formation pathway. This Limosilactobacillus reuteri (strain DSM 20016) (Lactobacillus reuteri) protein is Bacterial microcompartment shell protein PduB.